The following is a 254-amino-acid chain: Triosephosphate isomerase 2 (254 aa).

9 to 11 (NMK) serves as a coordination point for substrate. The active-site Electrophile is His-96. Glu-168 acts as the Proton acceptor in catalysis. Substrate-binding residues include Gly-174 and Ser-212.

The protein belongs to the triosephosphate isomerase family. Homodimer.

The protein resides in the cytoplasm. The enzyme catalyses D-glyceraldehyde 3-phosphate = dihydroxyacetone phosphate. It participates in polyol metabolism; glycerol degradation. Functionally, involved in the glycerol metabolism. Catalyzes stereospecifically the conversion of dihydroxyacetone phosphate (DHAP) to D-glyceraldehyde-3-phosphate (G3P). In Listeria innocua serovar 6a (strain ATCC BAA-680 / CLIP 11262), this protein is Triosephosphate isomerase 2.